The chain runs to 426 residues: Transcription termination factor Rho (426 aa).

Residues 58–131 enclose the Rho RNA-BD domain; that stretch reads QSLARGYLDI…VRVEAVNGLD (74 aa). ATP is bound by residues 176 to 181, 188 to 193, and R219; these read GRGQRA and KAGKTT.

The protein belongs to the Rho family. In terms of assembly, homohexamer. The homohexamer assembles into an open ring structure.

In terms of biological role, facilitates transcription termination by a mechanism that involves Rho binding to the nascent RNA, activation of Rho's RNA-dependent ATPase activity, and release of the mRNA from the DNA template. This is Transcription termination factor Rho from Deinococcus radiodurans (strain ATCC 13939 / DSM 20539 / JCM 16871 / CCUG 27074 / LMG 4051 / NBRC 15346 / NCIMB 9279 / VKM B-1422 / R1).